We begin with the raw amino-acid sequence, 35 residues long: Augerpeptide hheTx4 (35 aa).

Contains 4 disulfide bonds. In terms of tissue distribution, expressed by the venom duct.

It localises to the secreted. In Hastula hectica (Sea snail), this protein is Augerpeptide hheTx4.